The chain runs to 204 residues: Methylthioribulose-1-phosphate dehydratase (204 aa).

Zn(2+) contacts are provided by histidine 94 and histidine 96.

Belongs to the aldolase class II family. MtnB subfamily. Zn(2+) is required as a cofactor.

The enzyme catalyses 5-(methylsulfanyl)-D-ribulose 1-phosphate = 5-methylsulfanyl-2,3-dioxopentyl phosphate + H2O. Its pathway is amino-acid biosynthesis; L-methionine biosynthesis via salvage pathway; L-methionine from S-methyl-5-thio-alpha-D-ribose 1-phosphate: step 2/6. Catalyzes the dehydration of methylthioribulose-1-phosphate (MTRu-1-P) into 2,3-diketo-5-methylthiopentyl-1-phosphate (DK-MTP-1-P). This chain is Methylthioribulose-1-phosphate dehydratase, found in Pseudomonas savastanoi pv. phaseolicola (strain 1448A / Race 6) (Pseudomonas syringae pv. phaseolicola (strain 1448A / Race 6)).